An 82-amino-acid chain; its full sequence is EMBRYO SURROUNDING FACTOR 1.2 (82 aa).

Positions Met1–Gln23 are cleaved as a signal peptide. Cystine bridges form between Cys40–Cys56, Cys45–Cys77, Cys54–Cys71, and Cys57–Cys64.

It belongs to the MEG family. As to expression, expressed exclusively in ovule embryo sacs and in early developing endosperms.

In terms of biological role, maternally-contributed central cell peptide regulating suspensor development and correct auxin distribution in early developing embryos. The sequence is that of EMBRYO SURROUNDING FACTOR 1.2 (ESF1.2) from Arabidopsis thaliana (Mouse-ear cress).